The primary structure comprises 1367 residues: Dynactin, 150 kDa isoform (1367 aa).

Positions 28-70 (GETAFAPGTWVGIELDEPSGKNDGSVQGERYFNCEMGYGMFVR) constitute a CAP-Gly domain. A disordered region spans residues 76–318 (VIAQPPPPPP…NLKATTITPR (243 aa)). Composition is skewed to low complexity over residues 88 to 99 (TFRRSVTTRPTS) and 132 to 149 (PSRTSSTSITRSPTRSPT). Positions 150-163 (KQLATASSSGNPSR) are enriched in polar residues. 2 stretches are compositionally biased toward low complexity: residues 164–190 (SGTPSTTTKPAGPTTRTRPSLSTSRHS) and 243–259 (STGSVSSVGKSGFKRGS). Coiled coils occupy residues 321 to 598 (ITNT…MQEE), 637 to 698 (LQSD…EAEQ), and 1039 to 1199 (AELK…RARL).

It belongs to the dynactin 150 kDa subunit family. Large macromolecular complex of at least 10 components; p150(glued) binds directly to microtubules and to cytoplasmic dynein.

It localises to the cytoplasm. Its subcellular location is the cytoskeleton. In terms of biological role, required for the cytoplasmic dynein-driven retrograde movement of vesicles and organelles along microtubules. Dynein-dynactin interaction is a key component of the mechanism of axonal transport of vesicles and organelles. In Neurospora crassa (strain ATCC 24698 / 74-OR23-1A / CBS 708.71 / DSM 1257 / FGSC 987), this protein is Dynactin, 150 kDa isoform (ro-3).